Reading from the N-terminus, the 84-residue chain is Omega-theraphotoxin-Pm1a (84 aa).

A signal peptide spans 1 to 21; the sequence is MKTSMLAVFVALPLAFVLTAA. Residues 22–45 constitute a propeptide that is removed on maturation; the sequence is TEERAHPNELVNSLVELVKLDAER. 3 disulfides stabilise this stretch: Cys52-Cys66, Cys59-Cys71, and Cys65-Cys78.

This sequence belongs to the neurotoxin 10 (Hwtx-1) family. 41 (Jztx-36) subfamily. As to expression, expressed by the venom gland.

The protein localises to the secreted. In terms of biological role, omega-conotoxins act at presynaptic membranes, they bind and block voltage-gated calcium channels (Cav). This toxin inhibits barium currents (IBa) mediated by L-type voltage-gated calcium channels Cav1.2/CACNA1C (IC(50)=825 nM) and Cav1.3/CACNA1C (IC(50)=2240 nM). In Pelinobius muticus (King baboon spider), this protein is Omega-theraphotoxin-Pm1a.